We begin with the raw amino-acid sequence, 956 residues long: MEVTCLLLLALIPFHCRGQGVYAPAQAQIVHAGQACVVKEDNISERVYTIRESDTLVLQCLVTGHPRPQVRWTKTAGSASDKFQETSVFNETLRIERIARTQGGRYYCKAENGVGVPAIKSIRVDVQYLDEPVLTVHQTVSDVRGNFYQEKTVFLRCTVSSNPPARFIWKRGSDTLSHSQDNGVDIYEPLYTQGETKVLKLKNLRPQDYASYTCQVSVRNVCGIPDKSITFQLTNTTAPPTLKLSVNETLVVNPGENVTVQCLLTGGDPLPQLHWSHGPGPLPLGALAQGGTLSIPSVQARDSGYYNCTATNNVGNPAKKTVNLLVRSLKNATFQITPDMIKESENIQLGQDLKLSCHVDAVPQEKVNYQWFKNGKPARTSKRLLVTRNDPELPAVTSSLELIDLHFSDYGTYLCVASFPGSPVPDLSVEVNISSETVPPTISVPKGRAVVTVREGSPAELQCEVRGKPRPPVLWSRVDKEAALLPSGLALEETPDGKLRVERVSREMSGTYRCQTARYNGFNVRAREAQVQLTVHFPPEVEPSSQDVRQALGRPVLLRCSLLRGSPQRIASAVWRFKGQLLPPPPVLPAAAAEGPDHAELRLDALTRDSSGNYECSVSNDVGSATCLFQVSAKAYSPEFYFDTPNPTRSHKLSKNYSYVLQWTQREPDAVDPVLNYRLSIRQLNQHNAMVKAIPVRRVEKGQLLEYTLTDLRVPHSYEIHLTPYTTFGAGDMASRVIHYTEPINSPSLSDNTCHFEDEKICGYTQDLTDNFDWTRQNALTQNPKRSPNTGPPTDISGTPEGYYMFIETSRPRELGDRARLVSPLYNASAKFYCVSFFYHMYGKHIGSLNLLVRSRNKGTLDTHAWSLSGNKGNVWQQAHVPINPSGPFQIIFEGVRGSGYLGDIAIDDVTLKKGECPRRQMDPNKVVVMPGSGAPRLSSLQLWGSMTIFLLALQR.

Positions 1–18 (MEVTCLLLLALIPFHCRG) are cleaved as a signal peptide. 2 Ig-like domains span residues 24-123 (PAQA…KSIR) and 132-230 (PVLT…KSIT). N-linked (GlcNAc...) asparagine glycosylation is present at Asn42. 2 cysteine pairs are disulfide-bonded: Cys60-Cys108 and Cys157-Cys214. N-linked (GlcNAc...) asparagine glycans are attached at residues Asn235, Asn257, and Asn307. 4 Ig-like domains span residues 240-323 (PTLK…KTVN), 338-432 (PDMI…VEVN), 440-534 (PTIS…VQLT), and 539-632 (PEVE…FQVS). Cystine bridges form between Cys262–Cys308, Cys357–Cys415, Cys463–Cys514, and Cys560–Cys616. A Fibronectin type-III domain is found at 644 to 744 (TPNPTRSHKL…SRVIHYTEPI (101 aa)). In terms of domain architecture, MAM spans 752 to 919 (NTCHFEDEKI…VTLKKGECPR (168 aa)). The segment covering 780–789 (LTQNPKRSPN) has biased composition (polar residues). Residues 780 to 799 (LTQNPKRSPNTGPPTDISGT) form a disordered region. The GPI-anchor amidated serine moiety is linked to residue Ser933. Residues 934-956 (GAPRLSSLQLWGSMTIFLLALQR) constitute a propeptide, removed in mature form.

As to quaternary structure, interacts heterophilically through its MAM domain with proteins in axon-rich regions and through its Ig-like domains with proteins in differentiating muscle. Interacts (through the Ig-like domains) with NLGN2. In terms of tissue distribution, high levels detected in developing central and peripheral nervous systems with little expression elsewhere. In brain, highest levels in cerebral cortex and hindbrain at E15. At postnatal day 1, highest levels in basilar pons and superficial layers of the neocortex. In the developing spinal cord, restricted to a subpopulation of neurons in the dorsal and spinal ventral cord, probably D1 interneurons. Expressed in brain.

It is found in the cell membrane. In terms of biological role, required for radial migration of cortical neurons in the superficial layer of the neocortex. Plays a role in the formation or maintenance of inhibitory synapses. May function by inhibiting the activity of NLGN2. The polypeptide is MAM domain-containing glycosylphosphatidylinositol anchor protein 1 (Mdga1) (Rattus norvegicus (Rat)).